The following is a 247-amino-acid chain: Adenosylcobinamide-GDP ribazoletransferase (247 aa).

Helical transmembrane passes span 34-54 (IVMFPFIGLILGGISGLIFIL), 59-79 (CGIPLAALFCILALALLTGGF), 113-133 (GGLALIFVLLAKILVVSELAL), 138-158 (MLAALAVACAAGHGSAVLLMY), 171-191 (VFIGKVSGRQTCITLGLAVIV), and 194-214 (VLLPGMQGLATMVVTLAAIFI).

The protein belongs to the CobS family. The cofactor is Mg(2+).

It localises to the cell inner membrane. The catalysed reaction is alpha-ribazole + adenosylcob(III)inamide-GDP = adenosylcob(III)alamin + GMP + H(+). It carries out the reaction alpha-ribazole 5'-phosphate + adenosylcob(III)inamide-GDP = adenosylcob(III)alamin 5'-phosphate + GMP + H(+). The protein operates within cofactor biosynthesis; adenosylcobalamin biosynthesis; adenosylcobalamin from cob(II)yrinate a,c-diamide: step 7/7. Joins adenosylcobinamide-GDP and alpha-ribazole to generate adenosylcobalamin (Ado-cobalamin). Also synthesizes adenosylcobalamin 5'-phosphate from adenosylcobinamide-GDP and alpha-ribazole 5'-phosphate. The chain is Adenosylcobinamide-GDP ribazoletransferase from Salmonella paratyphi A (strain ATCC 9150 / SARB42).